A 351-amino-acid chain; its full sequence is UDP-N-acetylglucosamine--N-acetylmuramyl-(pentapeptide) pyrophosphoryl-undecaprenol N-acetylglucosamine transferase (351 aa).

UDP-N-acetyl-alpha-D-glucosamine-binding positions include 11 to 13, Asn120, Arg161, Ser187, and Gln281; that span reads TGG.

This sequence belongs to the glycosyltransferase 28 family. MurG subfamily.

It is found in the cell inner membrane. It carries out the reaction di-trans,octa-cis-undecaprenyl diphospho-N-acetyl-alpha-D-muramoyl-L-alanyl-D-glutamyl-meso-2,6-diaminopimeloyl-D-alanyl-D-alanine + UDP-N-acetyl-alpha-D-glucosamine = di-trans,octa-cis-undecaprenyl diphospho-[N-acetyl-alpha-D-glucosaminyl-(1-&gt;4)]-N-acetyl-alpha-D-muramoyl-L-alanyl-D-glutamyl-meso-2,6-diaminopimeloyl-D-alanyl-D-alanine + UDP + H(+). It participates in cell wall biogenesis; peptidoglycan biosynthesis. Its function is as follows. Cell wall formation. Catalyzes the transfer of a GlcNAc subunit on undecaprenyl-pyrophosphoryl-MurNAc-pentapeptide (lipid intermediate I) to form undecaprenyl-pyrophosphoryl-MurNAc-(pentapeptide)GlcNAc (lipid intermediate II). This is UDP-N-acetylglucosamine--N-acetylmuramyl-(pentapeptide) pyrophosphoryl-undecaprenol N-acetylglucosamine transferase from Rippkaea orientalis (strain PCC 8801 / RF-1) (Cyanothece sp. (strain PCC 8801)).